The following is a 161-amino-acid chain: Large ribosomal subunit protein uL15 (161 aa).

Residues 1-57 (MRLKDAIPKKGSQQRGRRVGRGISAGQGASCGKGMRGQKSRSGGSTRPGFEGGQNPL) are disordered. The segment covering 23–35 (ISAGQGASCGKGM) has biased composition (gly residues).

Belongs to the universal ribosomal protein uL15 family. Part of the 50S ribosomal subunit.

Its function is as follows. Binds to the 23S rRNA. The polypeptide is Large ribosomal subunit protein uL15 (Trichodesmium erythraeum (strain IMS101)).